Consider the following 143-residue polypeptide: Transcriptional regulator MraZ (143 aa).

SpoVT-AbrB domains are found at residues 5-47 (EYTH…PLIE) and 76-119 (ACEC…DAER).

The protein belongs to the MraZ family. In terms of assembly, forms oligomers.

The protein localises to the cytoplasm. The protein resides in the nucleoid. The chain is Transcriptional regulator MraZ from Limosilactobacillus fermentum (strain NBRC 3956 / LMG 18251) (Lactobacillus fermentum).